We begin with the raw amino-acid sequence, 42 residues long: Cytochrome b559 subunit beta (42 aa).

Residues 17–33 (WLSIHALAVPTVFFLGA) form a helical membrane-spanning segment. His21 is a heme binding site.

The protein belongs to the PsbE/PsbF family. In terms of assembly, heterodimer of an alpha subunit and a beta subunit. PSII is composed of 1 copy each of membrane proteins PsbA, PsbB, PsbC, PsbD, PsbE, PsbF, PsbH, PsbI, PsbJ, PsbK, PsbL, PsbM, PsbT, PsbX, PsbY, PsbZ, Psb30/Ycf12, at least 3 peripheral proteins of the oxygen-evolving complex and a large number of cofactors. It forms dimeric complexes. The cofactor is heme b.

It localises to the plastid. Its subcellular location is the chloroplast thylakoid membrane. Functionally, this b-type cytochrome is tightly associated with the reaction center of photosystem II (PSII). PSII is a light-driven water:plastoquinone oxidoreductase that uses light energy to abstract electrons from H(2)O, generating O(2) and a proton gradient subsequently used for ATP formation. It consists of a core antenna complex that captures photons, and an electron transfer chain that converts photonic excitation into a charge separation. This chain is Cytochrome b559 subunit beta, found in Tupiella akineta (Green alga).